A 2812-amino-acid polypeptide reads, in one-letter code: Polyunsaturated fatty acid synthase subunit A (2812 aa).

Residues 12 to 472 enclose the Ketosynthase family 3 (KS3) domain; sequence DTRIAVIGMS…GANYHAVLEE (461 aa). Catalysis depends on for beta-ketoacyl synthase activity residues Cys-213, His-348, and His-390. The Malonyl-CoA:ACP transacylase (MAT) domain maps to 602-913; it reads LFSGQGAQYT…TVSVNPASGK (312 aa). Positions 1000–1048 form a coiled coil; sequence DEEAKREAARLQKQLEDAQRQLDEAKRAADEANQKLAAAKEEAKSAAAS. 3 consecutive Carrier domains span residues 1114-1193, 1232-1308, and 1342-1418; these read ALLA…KAEI, ERAE…KAEI, and AKAE…KAEI. O-(pantetheine 4'-phosphoryl)serine occurs at positions 1152, 1267, and 1377. Residues 1422-1442 are disordered; it reads SAPAPAAAAPAPAAPAPAAAA. Low complexity predominate over residues 1423–1442; it reads APAPAAAAPAPAAPAPAAAA. The Carrier 4 domain maps to 1455 to 1531; the sequence is AKAETVVMEV…EVVDAMKAEI (77 aa). Ser-1490 carries the O-(pantetheine 4'-phosphoryl)serine modification. Residues 1535–1555 form a disordered region; sequence SAPAPAAAAPAPAAPAPAAAA. Residues 1536–1555 show a composition bias toward low complexity; that stretch reads APAPAAAAPAPAAPAPAAAA. 4 Carrier domains span residues 1568–1644, 1681–1757, 1792–1868, and 1903–1979; these read AKAE…KAEI. O-(pantetheine 4'-phosphoryl)serine is present on residues Ser-1603, Ser-1716, Ser-1827, and Ser-1938. Residues 2257–2484 enclose the Ketoreductase (KR) domain; it reads VVSGGARGIT…VKSICFGPWD (228 aa). An N-terminal hotdog fold region spans residues 2524–2651; it reads EILVGNWRTP…RAVVVLSSQG (128 aa). Residues 2524 to 2812 form the PKS/mFAS DH domain; the sequence is EILVGNWRTP…SVIATDSLAF (289 aa). The dehydratase (DH) domain stretch occupies residues 2540 to 2800; that stretch reads ETITLHRKIS…NEQGDLFIDV (261 aa). Residue His-2559 is the Proton acceptor; for dehydratase activity of the active site. Positions 2666-2812 are C-terminal hotdog fold; the sequence is ADPAAQSAVY…SVIATDSLAF (147 aa). Asp-2730 serves as the catalytic Proton donor; for dehydratase activity.

In terms of assembly, component of the polyunsaturated fatty acid synthase complex composed of at least ORF-A, ORF-B and ORF-C. It depends on pantetheine 4'-phosphate as a cofactor.

It participates in lipid metabolism; fatty acid biosynthesis. Functionally, poliketide synthase-like protein; part of the polyunsaturated fatty acid synthase composed of the 3 PKS-like subunits A, B and C. While the saturated fatty acids (SFAs) in Thraustochytrium are produced by the conventional fatty acid synthase (FAS) pathway, polyunsaturated fatty acids (PUFAs) including docosahexeanoic acid (DHA) and docosapentaenoic acid (DPA) are synthesized via an anaerobical PKS pathway. PUFA synthase assimilates fatty acyl-CoA, the product of FAS, as the starter unit to synthesize DPA, and this starter unit may be butyryl-CoA, hexanoyl-CoA, or octanoyl-CoA. DPA and DHA biosynthesis seem to differ by the reduction at the N-3 position by PUFA synthase, not the extension of carbon chain. In DHA biosynthesis, PUFA synthase extends the fatty acyl chain from the methyl toward the carboxyl end, and the double bond is formed when the carbon chain is growing, instead of afterward. Therefore, PUFA synthase is unable to transform DPA to DHA, suggesting that DPA is not the precursor of DHA. Moreover, DPA molecule is partly extended by FAS KS domain, so DPA biosynthesis is less dependent on PUFA synthase KS domain than DHA. This is Polyunsaturated fatty acid synthase subunit A from Thraustochytrium sp. (strain ATCC 26185 / S-3).